The sequence spans 339 residues: GTPase Obg (339 aa).

Residues Met1–Leu159 enclose the Obg domain. Residues Ala160–Glu333 enclose the OBG-type G domain. GTP contacts are provided by residues Gly166–Ser173, Phe191–Tyr195, Asp213–Gly216, Asn283–Asp286, and Ser314–Ile316. 2 residues coordinate Mg(2+): Ser173 and Thr193.

The protein belongs to the TRAFAC class OBG-HflX-like GTPase superfamily. OBG GTPase family. As to quaternary structure, monomer. The cofactor is Mg(2+).

Its subcellular location is the cytoplasm. Functionally, an essential GTPase which binds GTP, GDP and possibly (p)ppGpp with moderate affinity, with high nucleotide exchange rates and a fairly low GTP hydrolysis rate. Plays a role in control of the cell cycle, stress response, ribosome biogenesis and in those bacteria that undergo differentiation, in morphogenesis control. This chain is GTPase Obg, found in Coxiella burnetii (strain RSA 331 / Henzerling II).